Consider the following 187-residue polypeptide: Elongation factor P (187 aa).

Belongs to the elongation factor P family.

Its subcellular location is the cytoplasm. Its pathway is protein biosynthesis; polypeptide chain elongation. Its function is as follows. Involved in peptide bond synthesis. Stimulates efficient translation and peptide-bond synthesis on native or reconstituted 70S ribosomes in vitro. Probably functions indirectly by altering the affinity of the ribosome for aminoacyl-tRNA, thus increasing their reactivity as acceptors for peptidyl transferase. This is Elongation factor P from Desulfatibacillum aliphaticivorans.